A 459-amino-acid chain; its full sequence is DNA damage-inducible protein F (459 aa).

A run of 12 helical transmembrane segments spans residues Pro-2 to Leu-22, Leu-29 to Val-49, Leu-63 to Leu-83, Leu-111 to Leu-131, Trp-154 to Gln-174, Val-180 to Gly-200, Gly-207 to Val-227, Leu-265 to Ile-285, Ala-289 to Val-309, Ile-338 to Leu-358, Ile-373 to Ile-393, and Leu-416 to Ala-436.

This sequence belongs to the multi antimicrobial extrusion (MATE) (TC 2.A.66.1) family.

It is found in the cell inner membrane. The polypeptide is DNA damage-inducible protein F (dinF) (Escherichia coli (strain K12)).